The sequence spans 151 residues: UPF0735 ACT domain-containing protein SH1278 (151 aa).

The 76-residue stretch at 74–149 folds into the ACT domain; it reads TLILYVNDIV…HVSKVELISM (76 aa).

Belongs to the UPF0735 family.

In Staphylococcus haemolyticus (strain JCSC1435), this protein is UPF0735 ACT domain-containing protein SH1278.